A 221-amino-acid chain; its full sequence is GTP cyclohydrolase III (221 aa).

The protein belongs to the archaeal-type GTP cyclohydrolase family.

The enzyme catalyses GTP + 3 H2O = 2-amino-5-formylamino-6-(5-phospho-D-ribosylamino)pyrimidin-4(3H)-one + 2 phosphate + 2 H(+). Its function is as follows. Catalyzes the formation of 2-amino-5-formylamino-6-ribofuranosylamino-4(3H)-pyrimidinone ribonucleotide monophosphate and inorganic phosphate from GTP. Also has an independent pyrophosphate phosphohydrolase activity. In Pyrobaculum neutrophilum (strain DSM 2338 / JCM 9278 / NBRC 100436 / V24Sta) (Thermoproteus neutrophilus), this protein is GTP cyclohydrolase III.